The sequence spans 214 residues: Soluble inorganic pyrophosphatase (214 aa).

The tract at residues 1-20 (MSEEDKTAASAEQPKRAPKL) is disordered. Residues lysine 64, arginine 78, and tyrosine 90 each contribute to the substrate site. Residues aspartate 100, aspartate 105, and aspartate 137 each contribute to the Mg(2+) site. Tyrosine 174 contributes to the substrate binding site.

Belongs to the PPase family. Mg(2+) is required as a cofactor.

The protein resides in the cytoplasm. It carries out the reaction diphosphate + H2O = 2 phosphate + H(+). The sequence is that of Soluble inorganic pyrophosphatase (IPP) from Zea mays (Maize).